The primary structure comprises 76 residues: uncharacterized protein (76 aa).

This is an uncharacterized protein from Thermoproteus tenax virus 1 (strain KRA1) (TTV1).